A 178-amino-acid polypeptide reads, in one-letter code: Meiotically up-regulated gene 95 protein (178 aa).

The Cytoplasmic segment spans residues 1-12 (MNLFVYIAQNPT). A helical; Signal-anchor for type II membrane protein membrane pass occupies residues 13–30 (LTKWFFCCVCTILTMPFF). The Lumenal segment spans residues 31-178 (KKPYRKRGIS…ESIEKPENDN (148 aa)).

It localises to the endoplasmic reticulum membrane. Has a role in meiosis. The sequence is that of Meiotically up-regulated gene 95 protein (mug95) from Schizosaccharomyces pombe (strain 972 / ATCC 24843) (Fission yeast).